The chain runs to 290 residues: Putative OX-2 membrane glycoprotein homolog (290 aa).

Positions 1 to 17 are cleaved as a signal peptide; it reads MSSLMLRLLPLLYIISA. The Extracellular segment spans residues 18–267; it reads HFVLHPETSP…SDETVFTWTV (250 aa). An Ig-like V-type domain is found at 23-135; the sequence is PETSPSLIYE…TFTVDNEKTS (113 aa). Cysteine 41 and cysteine 125 are disulfide-bonded. Residues asparagine 71, asparagine 104, asparagine 194, and asparagine 202 are each glycosylated (N-linked (GlcNAc...) asparagine; by host). An Ig-like C2-type domain is found at 146-236; it reads PIVVLYFRYL…TNQKASALVT (91 aa). Residues 268–288 traverse the membrane as a helical segment; that stretch reads PLILILISVIVLLISVCIVAF. At 289–290 the chain is on the cytoplasmic side; the sequence is KS.

The protein resides in the membrane. The chain is Putative OX-2 membrane glycoprotein homolog (U85) from Homo sapiens (Human).